Reading from the N-terminus, the 429-residue chain is Adenylosuccinate synthetase (429 aa).

GTP contacts are provided by residues 12-18 (GDEGKGK) and 40-42 (GHT). The Proton acceptor role is filled by Asp-13. Residues Asp-13 and Gly-40 each coordinate Mg(2+). Residues 13–16 (DEGK), 38–41 (NAGH), Thr-129, Arg-143, Gln-224, Thr-239, and Arg-303 each bind IMP. Residue His-41 is the Proton donor of the active site. A substrate-binding site is contributed by 299-305 (VTTGRAR). Residues Arg-305, 331–333 (KLD), and 413–415 (GVG) each bind GTP.

This sequence belongs to the adenylosuccinate synthetase family. As to quaternary structure, homodimer. The cofactor is Mg(2+).

The protein localises to the cytoplasm. It carries out the reaction IMP + L-aspartate + GTP = N(6)-(1,2-dicarboxyethyl)-AMP + GDP + phosphate + 2 H(+). The protein operates within purine metabolism; AMP biosynthesis via de novo pathway; AMP from IMP: step 1/2. Functionally, plays an important role in the de novo pathway of purine nucleotide biosynthesis. Catalyzes the first committed step in the biosynthesis of AMP from IMP. The chain is Adenylosuccinate synthetase from Rhodococcus erythropolis (strain PR4 / NBRC 100887).